A 227-amino-acid polypeptide reads, in one-letter code: Probable chorismate pyruvate-lyase (227 aa).

3 residues coordinate substrate: Arg75, Leu113, and Glu173. The interval Ser192 to Arg227 is disordered. A compositionally biased stretch (basic and acidic residues) spans Arg200–Ala212.

Belongs to the UbiC family.

The protein localises to the cytoplasm. It carries out the reaction chorismate = 4-hydroxybenzoate + pyruvate. It participates in cofactor biosynthesis; ubiquinone biosynthesis. Removes the pyruvyl group from chorismate, with concomitant aromatization of the ring, to provide 4-hydroxybenzoate (4HB) for the ubiquinone pathway. The sequence is that of Probable chorismate pyruvate-lyase from Paraburkholderia xenovorans (strain LB400).